Reading from the N-terminus, the 147-residue chain is Protein archease (147 aa).

The Ca(2+) site is built by Asp-17, Asp-146, and Ile-147.

Belongs to the archease family.

In terms of biological role, activates the tRNA-splicing ligase complex by facilitating the enzymatic turnover of catalytic subunit RtcB. Acts by promoting the guanylylation of RtcB, a key intermediate step in tRNA ligation. Can also alter the NTP specificity of RtcB such that ATP, dGTP or ITP is used efficiently. This chain is Protein archease, found in Pyrobaculum neutrophilum (strain DSM 2338 / JCM 9278 / NBRC 100436 / V24Sta) (Thermoproteus neutrophilus).